Here is a 239-residue protein sequence, read N- to C-terminus: MNIEQFTAGLEKKGISLSSFQLEQFETYYEWLVEWNEKMNLTSITEKKEVYLKHFYDSIAASFYVDFKKMNTLCDVGAGAGFPSLPIKICFPHLHVTIVDSLNKRIHFLNQLSDALKLENTAFYHDRAETFGRSKDHRESYDVVTARAVARLSVLSELCLPLVKKDGLFVALKAASADEEIETGKKAIKTLGGKIETVHSFQLPIEESERNIIVIKKQSQTPKKFPRKPGTPNKSPIEG.

Residues G77, F82, 128-129 (AE), and R147 each bind S-adenosyl-L-methionine. Positions 216–239 (KKQSQTPKKFPRKPGTPNKSPIEG) are disordered.

The protein belongs to the methyltransferase superfamily. RNA methyltransferase RsmG family.

The protein localises to the cytoplasm. Functionally, specifically methylates the N7 position of guanine in position 535 of 16S rRNA. This chain is Ribosomal RNA small subunit methyltransferase G, found in Bacillus licheniformis (strain ATCC 14580 / DSM 13 / JCM 2505 / CCUG 7422 / NBRC 12200 / NCIMB 9375 / NCTC 10341 / NRRL NRS-1264 / Gibson 46).